Here is a 246-residue protein sequence, read N- to C-terminus: N-alpha-acetyltransferase 11 (246 aa).

The tract at residues 1–58 is interaction with NAA15; sequence MNIRNARPEDLMNMQHCNLLCLPENYQMKYYFYHGLSWPQLSYIAEDEDGKIVGYVLA. An N-acetyltransferase domain is found at 1–152; sequence MNIRNARPED…DAYAMKRDLA (152 aa). Positions 175–246 are disordered; it reads EENQEAQDST…DSSEYLDSTS (72 aa). Polar residues predominate over residues 230–246; sequence SHSTDVQDSSEYLDSTS.

It belongs to the acetyltransferase family. ARD1 subfamily. As to quaternary structure, component of the N-terminal acetyltransferase A (NatA) complex composed of NAA11 and NAA15. Interacts with HIF1A.

The protein resides in the cytoplasm. The protein localises to the nucleus. It carries out the reaction N-terminal glycyl-[protein] + acetyl-CoA = N-terminal N(alpha)-acetylglycyl-[protein] + CoA + H(+). It catalyses the reaction N-terminal L-alanyl-[protein] + acetyl-CoA = N-terminal N(alpha)-acetyl-L-alanyl-[protein] + CoA + H(+). The catalysed reaction is N-terminal L-seryl-[protein] + acetyl-CoA = N-terminal N(alpha)-acetyl-L-seryl-[protein] + CoA + H(+). The enzyme catalyses N-terminal L-valyl-[protein] + acetyl-CoA = N-terminal N(alpha)-acetyl-L-valyl-[protein] + CoA + H(+). It carries out the reaction N-terminal L-cysteinyl-[protein] + acetyl-CoA = N-terminal N(alpha)-acetyl-L-cysteinyl-[protein] + CoA + H(+). It catalyses the reaction N-terminal L-threonyl-[protein] + acetyl-CoA = N-terminal N(alpha)-acetyl-L-threonyl-[protein] + CoA + H(+). In terms of biological role, displays alpha (N-terminal) acetyltransferase activity. Proposed alternative catalytic subunit of the N-terminal acetyltransferase A (NatA) complex. The polypeptide is N-alpha-acetyltransferase 11 (Naa11) (Rattus norvegicus (Rat)).